A 364-amino-acid polypeptide reads, in one-letter code: NAD(P)H-quinone oxidoreductase subunit 1, chloroplastic (364 aa).

The next 6 helical transmembrane spans lie at 27–47, 98–118, 127–147, 255–275, 301–321, and 337–357; these read IWLL…VLVI, FSVG…VIPF, ISIG…GLLM, GLFY…VTVL, VFGS…FLFV, and LLNL…LLTT.

This sequence belongs to the complex I subunit 1 family. In terms of assembly, NDH is composed of at least 16 different subunits, 5 of which are encoded in the nucleus.

Its subcellular location is the plastid. It localises to the chloroplast thylakoid membrane. It carries out the reaction a plastoquinone + NADH + (n+1) H(+)(in) = a plastoquinol + NAD(+) + n H(+)(out). It catalyses the reaction a plastoquinone + NADPH + (n+1) H(+)(in) = a plastoquinol + NADP(+) + n H(+)(out). NDH shuttles electrons from NAD(P)H:plastoquinone, via FMN and iron-sulfur (Fe-S) centers, to quinones in the photosynthetic chain and possibly in a chloroplast respiratory chain. The immediate electron acceptor for the enzyme in this species is believed to be plastoquinone. Couples the redox reaction to proton translocation, and thus conserves the redox energy in a proton gradient. In Illicium oligandrum (Star anise), this protein is NAD(P)H-quinone oxidoreductase subunit 1, chloroplastic.